A 373-amino-acid chain; its full sequence is NK1 transcription factor-related protein 1 (373 aa).

Disordered regions lie at residues 49 to 74 (ALPAESRETSPRHEPVPAGAPPTVHR), 149 to 231 (SDFT…RRAR), and 281 to 328 (KWKK…SMHT). The segment covering 53-63 (ESRETSPRHEP) has biased composition (basic and acidic residues). The segment covering 168–177 (EESSALTGNN) has biased composition (polar residues). The segment covering 196-210 (GQQTQQSSSNGQNHQ) has biased composition (low complexity). Positions 227–286 (PRRARTAFTYEQLVALENKFKSTRYLSVCERLNLALSLSLTETQVKIWFQNRRTKWKKQN) form a DNA-binding region, homeobox. Residues 296-310 (SGGGGGNGPSNGLGG) are compositionally biased toward gly residues.

Belongs to the NK-1 homeobox family.

It localises to the nucleus. May participate in the energy homeostasis regulation. This Danio rerio (Zebrafish) protein is NK1 transcription factor-related protein 1.